The primary structure comprises 199 residues: UPF0637 protein LACR_1918 (199 aa).

This sequence belongs to the UPF0637 family.

The protein is UPF0637 protein LACR_1918 of Lactococcus lactis subsp. cremoris (strain SK11).